The following is a 105-amino-acid chain: Host transcription reprogramming factor 7 (105 aa).

The signal sequence occupies residues 1–19; it reads MKTKTIFQLVALFAIGATA. A C2H2-type zinc finger spans residues 69–95; the sequence is YWCRIGNCNAAFKSLAARCRHEKTAVH.

It localises to the secreted. The protein localises to the host nucleus. Its function is as follows. Probable secreted effector that translocates into the nuclei of host cells to reprogram the expression of targeted genes by binding on effector binding elements in rice. The polypeptide is Host transcription reprogramming factor 7 (Pyricularia oryzae (strain 70-15 / ATCC MYA-4617 / FGSC 8958) (Rice blast fungus)).